Reading from the N-terminus, the 44-residue chain is Large ribosomal subunit protein bL34 (44 aa).

This sequence belongs to the bacterial ribosomal protein bL34 family.

The protein is Large ribosomal subunit protein bL34 of Wolbachia pipientis wMel.